We begin with the raw amino-acid sequence, 221 residues long: PKHD-type hydroxylase P9303_20491 (221 aa).

The Fe2OG dioxygenase domain maps to 80–174 (HIHGVMFSRS…RLVCVGWIQS (95 aa)). Fe cation-binding residues include H98, D100, and H155. A 2-oxoglutarate-binding site is contributed by R165.

The cofactor is Fe(2+). L-ascorbate is required as a cofactor.

This chain is PKHD-type hydroxylase P9303_20491, found in Prochlorococcus marinus (strain MIT 9303).